The sequence spans 295 residues: MSNLKDIKRKIKSVQNTQKTTRAMKLVSTAKLRKAEEAARYSRVYALKINEVLSEIAYKINQYASVVSESKFFDIKENIEKVDIIFVTADKGLCGGFNVQTIKTVRHMIDEFKAKKIKVRLRAVGKKGIEFFNFQGVDLLETYIGASSSPTYEKAQNIIKDAIDDFVNGVTDKVILVHNGYKNMISQEIRVNDIVPIEPSKIIGVETNSLMEFEPEDNYSKILDELLTKYFEYSMYYSLIDSLAAEHSARMQAMDNATNNAKERVKQLNLAYNKARQESITTELIEIISGVESMK.

Belongs to the ATPase gamma chain family. In terms of assembly, F-type ATPases have 2 components, CF(1) - the catalytic core - and CF(0) - the membrane proton channel. CF(1) has five subunits: alpha(3), beta(3), gamma(1), delta(1), epsilon(1). CF(0) has three main subunits: a, b and c.

The protein localises to the cell inner membrane. In terms of biological role, produces ATP from ADP in the presence of a proton gradient across the membrane. The gamma chain is believed to be important in regulating ATPase activity and the flow of protons through the CF(0) complex. The sequence is that of ATP synthase gamma chain from Campylobacter curvus (strain 525.92).